A 401-amino-acid polypeptide reads, in one-letter code: L-rhamnonate dehydratase (401 aa).

Residues His29 and Arg55 each contribute to the substrate site. Mg(2+) contacts are provided by Asp222, Glu248, and Glu276. The active-site Proton acceptor is the His325. Glu345 contributes to the substrate binding site.

It belongs to the mandelate racemase/muconate lactonizing enzyme family. RhamD subfamily. Homooctamer; tetramer of dimers. Requires Mg(2+) as cofactor.

It carries out the reaction L-rhamnonate = 2-dehydro-3-deoxy-L-rhamnonate + H2O. Catalyzes the dehydration of L-rhamnonate to 2-keto-3-deoxy-L-rhamnonate (KDR). The protein is L-rhamnonate dehydratase of Tolumonas auensis (strain DSM 9187 / NBRC 110442 / TA 4).